The primary structure comprises 263 residues: GTP cyclohydrolase 1 type 2 homolog (263 aa).

A divalent metal cation-binding residues include His-65, His-66, Asp-104, His-225, and Glu-229.

Belongs to the GTP cyclohydrolase I type 2/NIF3 family. Homohexamer.

The chain is GTP cyclohydrolase 1 type 2 homolog from Nostoc sp. (strain PCC 7120 / SAG 25.82 / UTEX 2576).